Consider the following 506-residue polypeptide: Tabersonine 3-oxygenase (506 aa).

Residues 1–5 are Lumenal-facing; sequence MEFHE. The helical transmembrane segment at 6–26 threads the bilayer; that stretch reads SSPFVFITRGFIFIAISIAVL. Topologically, residues 27–506 are cytoplasmic; that stretch reads RRIISKKTKT…DLQLIATSYA (480 aa). A heme-binding site is contributed by Cys-450.

Belongs to the cytochrome P450 family. It depends on heme as a cofactor. As to expression, expressed in leaf epidermis.

The protein resides in the endoplasmic reticulum membrane. It catalyses the reaction 16-methoxytabersonine + reduced [NADPH--hemoprotein reductase] + O2 = (3R)-1,2-didehydro-3-hydroxy-16-methoxy-2,3-dihydrotabersonine + oxidized [NADPH--hemoprotein reductase] + H2O + H(+). The enzyme catalyses (-)-tabersonine + reduced [NADPH--hemoprotein reductase] + O2 = (3R)-1,2-didehydro-3-hydroxy-2,3-dihydrotabersonine + oxidized [NADPH--hemoprotein reductase] + H2O + H(+). The protein operates within alkaloid biosynthesis; vindoline biosynthesis. Cytochrome P450 catalyzing the monooxygenation of 16-methoxytabersonine, 16-hydroxytabersonine and tabersonine, but not of 2,3-dihydrotabersonine. Converts the C2,C3 alkene of tabersonine and 16-methoxytabersonine to the epoxides, which then spontaneously open to form the corresponding imine alcohols. Inactive in converting amyrin to ursolic acid. This is Tabersonine 3-oxygenase from Catharanthus roseus (Madagascar periwinkle).